The chain runs to 184 residues: Elongation factor P (184 aa).

It belongs to the elongation factor P family.

The protein localises to the cytoplasm. The protein operates within protein biosynthesis; polypeptide chain elongation. Involved in peptide bond synthesis. Stimulates efficient translation and peptide-bond synthesis on native or reconstituted 70S ribosomes in vitro. Probably functions indirectly by altering the affinity of the ribosome for aminoacyl-tRNA, thus increasing their reactivity as acceptors for peptidyl transferase. The chain is Elongation factor P from Polaromonas sp. (strain JS666 / ATCC BAA-500).